Here is a 259-residue protein sequence, read N- to C-terminus: Type III pantothenate kinase (259 aa).

Residue 6–13 participates in ATP binding; the sequence is DVGNTNCT. Residue 107 to 110 participates in substrate binding; the sequence is GSDR. Residue Asp109 is the Proton acceptor of the active site. Asp129 contributes to the K(+) binding site. Thr132 provides a ligand contact to ATP. Thr184 contributes to the substrate binding site.

It belongs to the type III pantothenate kinase family. In terms of assembly, homodimer. It depends on NH4(+) as a cofactor. K(+) is required as a cofactor.

The protein localises to the cytoplasm. It catalyses the reaction (R)-pantothenate + ATP = (R)-4'-phosphopantothenate + ADP + H(+). The protein operates within cofactor biosynthesis; coenzyme A biosynthesis; CoA from (R)-pantothenate: step 1/5. Functionally, catalyzes the phosphorylation of pantothenate (Pan), the first step in CoA biosynthesis. The protein is Type III pantothenate kinase of Listeria monocytogenes serovar 1/2a (strain ATCC BAA-679 / EGD-e).